Reading from the N-terminus, the 329-residue chain is Quinone oxidoreductase (329 aa).

Ala-2 carries the N-acetylalanine modification. Residue Lys-23 is modified to N6-acetyllysine. Residues Tyr-53, 158-161 (SGGV), Gly-181, His-200, Asn-229, 246-249 (VGCR), and 269-271 (VSL) contribute to the NADP(+) site. Lys-296 is modified (N6-succinyllysine).

This sequence belongs to the zinc-containing alcohol dehydrogenase family. Quinone oxidoreductase subfamily. In terms of assembly, homotetramer.

It localises to the cytoplasm. The catalysed reaction is 2 a quinone + NADPH + H(+) = 2 a 1,4-benzosemiquinone + NADP(+). In terms of biological role, does not have alcohol dehydrogenase activity. Binds NADP and acts through a one-electron transfer process. Orthoquinones, such as 1,2-naphthoquinone or 9,10-phenanthrenequinone, are the best substrates (in vitro). May act in the detoxification of xenobiotics. Interacts with (AU)-rich elements (ARE) in the 3'-UTR of target mRNA species and enhances their stability. NADPH binding interferes with mRNA binding. The sequence is that of Quinone oxidoreductase (Cryz) from Rattus norvegicus (Rat).